Here is a 383-residue protein sequence, read N- to C-terminus: LIM/homeobox protein Lhx3 (383 aa).

LIM zinc-binding domains follow at residues 14–73 and 73–136; these read PLCA…RFGT and TKCA…AKQR. The residue at position 48 (threonine 48) is a Phosphothreonine. Serine 56 is modified (phosphoserine). A DNA-binding region (homeobox) is located at residues 142–201; sequence AKRPRTTITAKQLETLKSAYNTSPKPARHVREQLSSETGLDMRVVQVWFQNRRAKEKRLK. Residues 197-383 are disordered; it reads EKRLKKDAGR…WLDEVDHAQF (187 aa). At tyrosine 212 the chain carries Phosphotyrosine. The residue at position 223 (serine 223) is a Phosphoserine. Residues 307–334 show a composition bias toward low complexity; it reads PAALQSLPGPQPLLSSLVYPEAGLGLVP. Residues 335 to 344 are compositionally biased toward pro residues; it reads AGPPGGPPPM.

In terms of assembly, interacts with POU1F1. At neuronal promoters, interacts with LDB1, in motor neurons LDB1 is displaced by ISL1 and a ternary complex is formed in which ISL1 contacts both LHX3 and LDB1; allosteric structural changes in the DNA binding domain of LHX3, induced by the ISL1-LHX3 interaction, may explain differences in sequence specificity of the different complexes. Interacts with LDB2. May interact with CITED2/MRG1.

It is found in the nucleus. Its function is as follows. Transcription factor. Recognizes and binds to the consensus sequence motif 5'-AATTAATTA-3' in the regulatory elements of target genes, such as glycoprotein hormones alpha chain CGA and visual system homeobox CHX10, positively modulating transcription; transcription can be co-activated by LDB2. Synergistically enhances transcription from the prolactin promoter in cooperation with POU1F1/Pit-1. Required for the establishment of the specialized cells of the pituitary gland and the nervous system. Involved in the development of interneurons and motor neurons in cooperation with LDB1 and ISL1. This chain is LIM/homeobox protein Lhx3 (LHX3), found in Sus scrofa (Pig).